A 183-amino-acid polypeptide reads, in one-letter code: Ribosome rescue factor SmrB (183 aa).

A Smr domain is found at leucine 98–glutamate 173.

The protein belongs to the SmrB family. As to quaternary structure, associates with collided ribosomes, but not with correctly translating polysomes.

Its function is as follows. Acts as a ribosome collision sensor. Detects stalled/collided disomes (pairs of ribosomes where the leading ribosome is stalled and a second ribosome has collided with it) and endonucleolytically cleaves mRNA at the 5' boundary of the stalled ribosome. Stalled/collided disomes form a new interface (primarily via the 30S subunits) that binds SmrB. Cleaved mRNA becomes available for tmRNA ligation, leading to ribosomal subunit dissociation and rescue of stalled ribosomes. The sequence is that of Ribosome rescue factor SmrB from Salmonella arizonae (strain ATCC BAA-731 / CDC346-86 / RSK2980).